Here is a 215-residue protein sequence, read N- to C-terminus: Riboflavin synthase (215 aa).

2 Lumazine-binding repeats span residues 1 to 96 and 97 to 193; these read MFTG…FGGH and FVSG…YRFL. 2,4-dihydroxypteridine contacts are provided by residues 4–6, 47–49, 61–66, 100–102, Lys135, 144–146, and 158–163; these read GIV, CLT, DVMPET, GHV, SST, and SVIPHT.

As to quaternary structure, homotrimer.

It catalyses the reaction 2 6,7-dimethyl-8-(1-D-ribityl)lumazine + H(+) = 5-amino-6-(D-ribitylamino)uracil + riboflavin. The protein operates within cofactor biosynthesis; riboflavin biosynthesis; riboflavin from 2-hydroxy-3-oxobutyl phosphate and 5-amino-6-(D-ribitylamino)uracil: step 2/2. Its function is as follows. Catalyzes the dismutation of two molecules of 6,7-dimethyl-8-ribityllumazine, resulting in the formation of riboflavin and 5-amino-6-(D-ribitylamino)uracil. This is Riboflavin synthase (ribE) from Bacillus amyloliquefaciens (Bacillus velezensis).